A 138-amino-acid polypeptide reads, in one-letter code: Transcription antitermination protein NusB (138 aa).

Belongs to the NusB family.

Its function is as follows. Involved in transcription antitermination. Required for transcription of ribosomal RNA (rRNA) genes. Binds specifically to the boxA antiterminator sequence of the ribosomal RNA (rrn) operons. This Blochmanniella floridana protein is Transcription antitermination protein NusB.